The primary structure comprises 202 residues: Stress enhanced protein 2, chloroplastic (202 aa).

The transit peptide at Met-1 to Tyr-60 directs the protein to the chloroplast. 2 helical membrane-spanning segments follow: residues Leu-111 to Phe-131 and Ala-142 to Ser-162.

The protein belongs to the ELIP/psbS family.

Its subcellular location is the plastid. The protein resides in the chloroplast thylakoid membrane. In terms of biological role, may be involved in non-photochemical quenching, a process that maintains the balance between dissipation and utilization of light energy to minimize generation of oxidizing molecules, thereby protecting the plant against photo-oxidative damage. May play a photoprotective role in the thylakoid membrane in response to light stress. The polypeptide is Stress enhanced protein 2, chloroplastic (Arabidopsis thaliana (Mouse-ear cress)).